Reading from the N-terminus, the 102-residue chain is Large ribosomal subunit protein bL28 (102 aa).

A disordered region spans residues 1–20; the sequence is MSRRCELTAKGPQVGHKVSH.

The protein belongs to the bacterial ribosomal protein bL28 family.

In Bradyrhizobium sp. (strain ORS 278), this protein is Large ribosomal subunit protein bL28.